The sequence spans 652 residues: Coiled-coil domain-containing protein 81 (652 aa).

Ser-206 carries the phosphoserine modification. Over residues Lys-238 to Ser-256 the composition is skewed to basic and acidic residues. A disordered region spans residues Lys-238–Lys-258. Phosphoserine occurs at positions 275, 296, and 417. Residues Met-436–Asn-493 are a coiled coil.

It is found in the cytoplasm. It localises to the cytoskeleton. The protein localises to the microtubule organizing center. The protein resides in the centrosome. The chain is Coiled-coil domain-containing protein 81 (CCDC81) from Homo sapiens (Human).